The chain runs to 118 residues: MSIKYSNKINKIRTFALSLVFIGLFIAYLGVFFRENIIIMTTFMMVGFLAVIASTVVYFWIGMLSTKTVQIICPSCDKPTKMLGRVDACMHCNQPLTMDRNLEGKEFDEKYNKKSYKS.

Transmembrane regions (helical) follow at residues 12–32 (IRTF…LGVF) and 43–63 (FMMV…WIGM).

The protein belongs to the UPF0295 family.

It is found in the cell membrane. This is UPF0295 protein BT9727_0449 from Bacillus thuringiensis subsp. konkukian (strain 97-27).